We begin with the raw amino-acid sequence, 101 residues long: Small ribosomal subunit protein uS10 (101 aa).

It belongs to the universal ribosomal protein uS10 family. In terms of assembly, part of the 30S ribosomal subunit.

In terms of biological role, involved in the binding of tRNA to the ribosomes. The sequence is that of Small ribosomal subunit protein uS10 from Corynebacterium jeikeium (strain K411).